The chain runs to 265 residues: Tryptophan synthase alpha chain (265 aa).

Residues glutamate 49 and aspartate 60 each act as proton acceptor in the active site.

The protein belongs to the TrpA family. In terms of assembly, tetramer of two alpha and two beta chains.

The catalysed reaction is (1S,2R)-1-C-(indol-3-yl)glycerol 3-phosphate + L-serine = D-glyceraldehyde 3-phosphate + L-tryptophan + H2O. It participates in amino-acid biosynthesis; L-tryptophan biosynthesis; L-tryptophan from chorismate: step 5/5. In terms of biological role, the alpha subunit is responsible for the aldol cleavage of indoleglycerol phosphate to indole and glyceraldehyde 3-phosphate. This Paracoccus denitrificans (strain Pd 1222) protein is Tryptophan synthase alpha chain.